The chain runs to 305 residues: Dihydroorotate dehydrogenase B (NAD(+)), catalytic subunit (305 aa).

FMN-binding positions include serine 21 and 45 to 46 (KA). Substrate-binding positions include lysine 45 and 69–73 (NAIGL). Asparagine 99 and asparagine 127 together coordinate FMN. Asparagine 127 serves as a coordination point for substrate. Cysteine 130 (nucleophile) is an active-site residue. Residues lysine 165 and isoleucine 191 each coordinate FMN. 192–193 (NT) provides a ligand contact to substrate. Residues glycine 217, 243-244 (GG), and 265-266 (GT) contribute to the FMN site.

Belongs to the dihydroorotate dehydrogenase family. Type 1 subfamily. In terms of assembly, heterotetramer of 2 PyrK and 2 PyrD type B subunits. It depends on FMN as a cofactor.

The protein resides in the cytoplasm. It carries out the reaction (S)-dihydroorotate + NAD(+) = orotate + NADH + H(+). The protein operates within pyrimidine metabolism; UMP biosynthesis via de novo pathway; orotate from (S)-dihydroorotate (NAD(+) route): step 1/1. Functionally, catalyzes the conversion of dihydroorotate to orotate with NAD(+) as electron acceptor. The protein is Dihydroorotate dehydrogenase B (NAD(+)), catalytic subunit (pyrD) of Halalkalibacterium halodurans (strain ATCC BAA-125 / DSM 18197 / FERM 7344 / JCM 9153 / C-125) (Bacillus halodurans).